Consider the following 296-residue polypeptide: Complex I intermediate-associated protein 30, mitochondrial (296 aa).

The N-terminal 29 residues, 1-29 (MNSLLRQGLRLGCCLPAVQQQIHTTAVHR), are a transit peptide targeting the mitochondrion.

It belongs to the CIA30 family. In terms of assembly, associates with mitochondrial complex I assembly intermediates during its biogenesis.

The protein localises to the mitochondrion. In terms of biological role, chaperone protein involved in the assembly of the mitochondrial NADH:ubiquinone oxidoreductase complex (complex I). The chain is Complex I intermediate-associated protein 30, mitochondrial from Drosophila melanogaster (Fruit fly).